The following is a 210-amino-acid chain: Glutathione S-transferase P 10 (210 aa).

The GST N-terminal domain maps to 2–81 (AVPQLYYFTI…HLGRVHGLNG (80 aa)). Glutathione-binding positions include Tyr-8, Trp-41, Lys-45, 52-53 (QL), and 65-66 (QT). In terms of domain architecture, GST C-terminal spans 83-200 (NEQEATFLDM…YLEKRKADKV (118 aa)).

Belongs to the GST superfamily. Pi family. In terms of assembly, homodimer. Expressed in cells at the mouth and adjacent to the pharyngeal bulbs of the head and also in the tail.

It carries out the reaction RX + glutathione = an S-substituted glutathione + a halide anion + H(+). Its function is as follows. Conjugation of reduced glutathione to a wide number of exogenous and endogenous hydrophobic electrophiles. Responsible for approximately one-third of 4-hydroxy-2-nonenal conjugation. May play a role in the detoxification of reactive oxygen species produced during pathogenic bacterial infection. The protein is Glutathione S-transferase P 10 of Caenorhabditis elegans.